The chain runs to 726 residues: Pre-mRNA-splicing factor CLF1 (726 aa).

HAT repeat units lie at residues 55 to 87 (EFQA…WEAS), 89 to 121 (NEYE…MELK), 123 to 155 (RNIN…LEEL), 157 to 188 (LNVS…LEER), 190 to 221 (NELD…FEED), 223 to 262 (GQPD…METR), 264 to 298 (KEFE…FEKQ), 308 to 340 (TVLG…LEED), 352 to 386 (VEPM…LWLQ), 396 to 432 (KDYD…FEIR), 434 to 465 (LDVS…LEMR), 467 to 499 (REFD…VESA), 501 to 534 (EDFE…FEAG), 536 to 567 (GERE…MEIA), 585 to 626 (GDAD…EHGD), and 635 to 667 (DMLP…DDER). The tract at residues 682–726 (AWAQQRAGQGEEGGLSYDLPSDSEDENEDGDEDGDGREEEGMDQD) is disordered. A compositionally biased stretch (acidic residues) spans 702–726 (SDSEDENEDGDEDGDGREEEGMDQD).

The protein belongs to the crooked-neck family. As to quaternary structure, associated with the spliceosome.

It is found in the nucleus. In terms of biological role, involved in pre-mRNA splicing and cell cycle progression. Required for the spliceosome assembly and initiation of the DNA replication. In Cryptococcus neoformans var. neoformans serotype D (strain B-3501A) (Filobasidiella neoformans), this protein is Pre-mRNA-splicing factor CLF1 (CLF1).